The following is a 238-amino-acid chain: Octanoyltransferase (238 aa).

Residues A44–I224 enclose the BPL/LPL catalytic domain. Substrate-binding positions include R82–H89, A154–G156, and G167–A169. C185 functions as the Acyl-thioester intermediate in the catalytic mechanism.

The protein belongs to the LipB family.

Its subcellular location is the cytoplasm. It catalyses the reaction octanoyl-[ACP] + L-lysyl-[protein] = N(6)-octanoyl-L-lysyl-[protein] + holo-[ACP] + H(+). It functions in the pathway protein modification; protein lipoylation via endogenous pathway; protein N(6)-(lipoyl)lysine from octanoyl-[acyl-carrier-protein]: step 1/2. Catalyzes the transfer of endogenously produced octanoic acid from octanoyl-acyl-carrier-protein onto the lipoyl domains of lipoate-dependent enzymes. Lipoyl-ACP can also act as a substrate although octanoyl-ACP is likely to be the physiological substrate. The protein is Octanoyltransferase of Mycolicibacterium gilvum (strain PYR-GCK) (Mycobacterium gilvum (strain PYR-GCK)).